We begin with the raw amino-acid sequence, 400 residues long: Riboflavin biosynthesis protein RibBA (400 aa).

The interval 1 to 202 (MTTFGTIEQA…IADLVMYRRR (202 aa)) is DHBP synthase. D-ribulose 5-phosphate is bound by residues 28–29 (RE), Asp-33, 141–145 (RTGHT), and Glu-165. Residue Glu-29 participates in Mg(2+) binding. His-144 provides a ligand contact to Mg(2+). Positions 203 to 400 (TEKQVELVAE…KRDRMGHLLG (198 aa)) are GTP cyclohydrolase II. Residue 253–257 (RAHSE) coordinates GTP. Residues Cys-258, Cys-269, and Cys-271 each coordinate Zn(2+). Residues Gln-274, 297 to 299 (EGR), and Thr-319 each bind GTP. Catalysis depends on Asp-331, which acts as the Proton acceptor; for GTP cyclohydrolase activity. Catalysis depends on Arg-333, which acts as the Nucleophile; for GTP cyclohydrolase activity. GTP-binding residues include Thr-354 and Lys-359.

It in the N-terminal section; belongs to the DHBP synthase family. The protein in the C-terminal section; belongs to the GTP cyclohydrolase II family. Mg(2+) is required as a cofactor. It depends on Mn(2+) as a cofactor. Zn(2+) serves as cofactor.

It catalyses the reaction D-ribulose 5-phosphate = (2S)-2-hydroxy-3-oxobutyl phosphate + formate + H(+). It carries out the reaction GTP + 4 H2O = 2,5-diamino-6-hydroxy-4-(5-phosphoribosylamino)-pyrimidine + formate + 2 phosphate + 3 H(+). Its pathway is cofactor biosynthesis; riboflavin biosynthesis; 2-hydroxy-3-oxobutyl phosphate from D-ribulose 5-phosphate: step 1/1. The protein operates within cofactor biosynthesis; riboflavin biosynthesis; 5-amino-6-(D-ribitylamino)uracil from GTP: step 1/4. Functionally, catalyzes the conversion of D-ribulose 5-phosphate to formate and 3,4-dihydroxy-2-butanone 4-phosphate. Its function is as follows. Catalyzes the conversion of GTP to 2,5-diamino-6-ribosylamino-4(3H)-pyrimidinone 5'-phosphate (DARP), formate and pyrophosphate. The protein is Riboflavin biosynthesis protein RibBA of Salinispora tropica (strain ATCC BAA-916 / DSM 44818 / JCM 13857 / NBRC 105044 / CNB-440).